The following is a 418-amino-acid chain: Gamma-glutamyl phosphate reductase (418 aa).

Belongs to the gamma-glutamyl phosphate reductase family.

Its subcellular location is the cytoplasm. The catalysed reaction is L-glutamate 5-semialdehyde + phosphate + NADP(+) = L-glutamyl 5-phosphate + NADPH + H(+). It functions in the pathway amino-acid biosynthesis; L-proline biosynthesis; L-glutamate 5-semialdehyde from L-glutamate: step 2/2. Catalyzes the NADPH-dependent reduction of L-glutamate 5-phosphate into L-glutamate 5-semialdehyde and phosphate. The product spontaneously undergoes cyclization to form 1-pyrroline-5-carboxylate. The protein is Gamma-glutamyl phosphate reductase of Geobacter metallireducens (strain ATCC 53774 / DSM 7210 / GS-15).